The chain runs to 162 residues: uncharacterized protein (162 aa).

The 77-residue stretch at 78–154 folds into the PUA domain; sequence KNLVVVDIGA…KAIKNLHYVG (77 aa).

This is an uncharacterized protein from Methanocaldococcus jannaschii (strain ATCC 43067 / DSM 2661 / JAL-1 / JCM 10045 / NBRC 100440) (Methanococcus jannaschii).